Reading from the N-terminus, the 313-residue chain is Ribonuclease Z (313 aa).

Zn(2+) contacts are provided by H62, H64, D66, H67, H142, D212, and H270. The Proton acceptor role is filled by D66.

Belongs to the RNase Z family. As to quaternary structure, homodimer. Zn(2+) is required as a cofactor.

It carries out the reaction Endonucleolytic cleavage of RNA, removing extra 3' nucleotides from tRNA precursor, generating 3' termini of tRNAs. A 3'-hydroxy group is left at the tRNA terminus and a 5'-phosphoryl group is left at the trailer molecule.. Its function is as follows. Zinc phosphodiesterase, which displays some tRNA 3'-processing endonuclease activity. Probably involved in tRNA maturation, by removing a 3'-trailer from precursor tRNA. This is Ribonuclease Z from Cytophaga hutchinsonii (strain ATCC 33406 / DSM 1761 / CIP 103989 / NBRC 15051 / NCIMB 9469 / D465).